A 407-amino-acid polypeptide reads, in one-letter code: Naringenin 8-dimethylallyltransferase 2, chloroplastic (407 aa).

The transit peptide at 1 to 23 (MGFVLPASFPGASSITTGGSCLR) directs the protein to the chloroplast. Transmembrane regions (helical) follow at residues 117 to 137 (FCRPYAIFSVVLGATFKSLVA), 145 to 165 (SLAFFIGWLQVVVAVICIHIF), 206 to 226 (ILGLGFAWIVGSWPLFWTVFI), 248 to 268 (VLTAISFIANVAVTRSLGFFL), 285 to 305 (LIFCTAIVSIYAIVIALFKDI), 328 to 348 (VFWICVSLLEMAYGVTILVGA), 352 to 372 (ILWSKIITVLGHAILASVLWY), and 383 to 403 (VVLQSFYMFIWKLHTAEYCLI).

It belongs to the UbiA prenyltransferase family. Requires Mg(2+) as cofactor. Mn(2+) serves as cofactor.

It is found in the plastid. It localises to the chloroplast membrane. It catalyses the reaction (2S)-naringenin + dimethylallyl diphosphate = sophoraflavanone B + diphosphate. Its function is as follows. Involved in the biosynthesis of sophoraflavanone G (SFG). Can use flavanones (naringenin, liquiritigenin and hesperetin) as substrates, but not flavonols or isoflavones. Shows a strict specificity for dimethylallyl diphosphate. The protein is Naringenin 8-dimethylallyltransferase 2, chloroplastic (N8DT-2) of Sophora flavescens (Shrubby sophora).